The following is a 421-amino-acid chain: Glutamate dehydrogenase (421 aa).

Lysine 105 is a catalytic residue. An NAD(+)-binding site is contributed by 220–226 (GYGNAGY).

The protein belongs to the Glu/Leu/Phe/Val dehydrogenases family. As to quaternary structure, homohexamer.

It is found in the cytoplasm. The protein resides in the chromosome. The catalysed reaction is L-glutamate + NAD(+) + H2O = 2-oxoglutarate + NH4(+) + NADH + H(+). It carries out the reaction L-glutamate + NADP(+) + H2O = 2-oxoglutarate + NH4(+) + NADPH + H(+). In Thermococcus kodakarensis (strain ATCC BAA-918 / JCM 12380 / KOD1) (Pyrococcus kodakaraensis (strain KOD1)), this protein is Glutamate dehydrogenase (gdhA).